A 530-amino-acid polypeptide reads, in one-letter code: Ankyrin repeat domain-containing protein 53 (530 aa).

The span at 1-15 (MASAGSTARRAGSGS) shows a compositional bias: low complexity. The tract at residues 1-99 (MASAGSTARR…PSPSKESDQT (99 aa)) is disordered. Over residues 32-41 (PSGSMQQANK) the composition is skewed to polar residues. 3 ANK repeats span residues 139–169 (KGFTAIHFAAQWGKLACLQVLVEEYKFPVDL), 173–206 (NSQTPLHLVIHRDNTTVALPCIYYLLEKGADLNA), and 210–239 (NGSTPLHLAARDGLLDCVKVLVQSGANVHA). Disordered stretches follow at residues 323–360 (GHSLVSNTKQARATALSKTPEQRESQRSRSFHPSVDAR) and 383–402 (PTMWNVSNNPARPPTTQISH). 2 stretches are compositionally biased toward polar residues: residues 326-341 (LVSNTKQARATALSKT) and 386-402 (WNVSNNPARPPTTQISH).

As to quaternary structure, interacts with PSRC1; recruited by PSRC1 to the spindle during mitosis. Post-translationally, phosphorylated during mitosis.

The protein localises to the cytoplasm. It localises to the cytoskeleton. The protein resides in the spindle. It is found in the spindle pole. Its function is as follows. Required for normal progression through mitosis. Involved in chromosome alignment and cytokinesis via regulation of microtubules polymerization. The polypeptide is Ankyrin repeat domain-containing protein 53 (ANKRD53) (Homo sapiens (Human)).